A 489-amino-acid polypeptide reads, in one-letter code: Blue-light-activated histidine kinase (489 aa).

The 75-residue stretch at 19–93 (ATDPFRAAVE…AIKSAIAAEK (75 aa)) folds into the PAS domain. Cys-69 carries the post-translational modification S-4a-FMN cysteine. PAC domains are found at residues 93–147 (KPID…ELEK) and 232–281 (YSIE…NKAL). The segment at 259-341 (NPLVLGIVQD…LLKENWAGAT (83 aa)) is HWE histidine kinase domain. His-288 is subject to Phosphohistidine; by autocatalysis.

In terms of processing, FMN binds covalently to cysteine after exposure to blue light and this bond is spontaneously broken in the dark.

The catalysed reaction is ATP + protein L-histidine = ADP + protein N-phospho-L-histidine.. Its function is as follows. Photosensitive kinase that is involved in increased bacterial virulence upon exposure to light. Once ejected from an infected animal host, sunlight acts as an environmental signal that increases the virulence of the bacterium, preparing it for infection of the next host. This photoreceptor protein is directly related to the bacterium's survival and replication within host macrophages. The polypeptide is Blue-light-activated histidine kinase (Brucella ovis (strain ATCC 25840 / 63/290 / NCTC 10512)).